The following is a 1503-amino-acid chain: Translocase of chloroplast 159, chloroplastic (1503 aa).

Positions 1–24 (MDSKSVTPEPTNPFYASSGQSGKT) are enriched in polar residues. A disordered region spans residues 1–210 (MDSKSVTPEP…GGKVDVDDKS (210 aa)). The chain crosses the membrane as a helical span at residues 21 to 37 (SGKTYASVVAAAAAAAA). The residue at position 71 (Ser-71) is a Phosphoserine. Composition is skewed to basic and acidic residues over residues 85 to 98 (KVSDEVDGSLKEDS) and 176 to 210 (SESKVKDVEEEDVGTKKDDEGESELGGKVDVDDKS). Ser-210, Ser-281, and Ser-288 each carry phosphoserine. Disordered regions lie at residues 298-338 (KFTS…DVEK) and 429-464 (VHNKFDPIGQGEGGEVELESDKATEEGGGKLVSEGD). The span at 447–456 (ESDKATEEGG) shows a compositional bias: basic and acidic residues. Residues Ser-448, Ser-461, Ser-589, Ser-609, Ser-630, Ser-632, and Ser-665 each carry the phosphoserine modification. Positions 610–633 (FGGKEVDQEPSGEGVTRVDGSESE) are disordered. Residues 781 to 804 (EEEKQKLEKLQSLRVKFLRLLQRL) adopt a coiled-coil conformation. Positions 853–1087 (IFSLNILVLG…RPQEPLDHRK (235 aa)) constitute an AIG1-type G domain. Residues 862–869 (GKAGVGKS) form a G1 region. Residues 865-870 (GVGKSA) and 884-889 (DAFGLS) contribute to the GTP site. Mg(2+) is bound at residue Ser-869. The segment at 884 to 887 (DAFG) is homodimerization. Residues 889–893 (STTSV) form a G2 region. Residues 909-912 (DTPG) form a G3 region. The interval 947 to 952 (RLDTQT) is homodimerization. Residues 981–984 (THAA) are G4. GTP-binding positions include His-982 and 1035-1036 (EN). The tract at residues 1035-1037 (ENH) is G5. The stretch at 1175–1203 (DYRVKLLQKKQWREELKRMKEMKKNGKKL) forms a coiled coil. A disordered region spans residues 1203 to 1222 (LGESEFGYPGEEDDPENGAP).

This sequence belongs to the TRAFAC class TrmE-Era-EngA-EngB-Septin-like GTPase superfamily. AIG1/Toc34/Toc159-like paraseptin GTPase family. TOC159 subfamily. Homodimer and heterodimer with TOC33. Part of the TOC core complex that includes 1 protein for the specific recognition of transit peptides surrounded by a ring composed of four proteins forming translocation channels, and four to five GTP-binding proteins providing energy. This core complex can interact with components of the TIC complex to form a larger import complex. Chloroplastic protein precursor such as prSS (precursor of the RuBisCO small subunit) interacts with these complexes. The TOC complex contains a specific subset of polar lipids such as digalactosyldiacylglyceride (DGDG), phosphatidylcholine (PC) and phosphatidylglycerol (PG). Interacts with SP1. Requires Mg(2+) as cofactor. In terms of processing, phosphorylated by KOC1.

The protein resides in the plastid. Its subcellular location is the chloroplast outer membrane. The protein localises to the cytoplasm. Functionally, GTPase involved in protein precursor import into chloroplasts. Seems to recognize chloroplast-destined precursor proteins and regulate their presentation to the translocation channel through GTP hydrolysis. Required for chloroplast biogenesis. Probably specialized in the import of nuclear encoded photosynthetic preproteins from the cytoplasm to the chloroplast. This is Translocase of chloroplast 159, chloroplastic from Arabidopsis thaliana (Mouse-ear cress).